A 369-amino-acid polypeptide reads, in one-letter code: Putative cyclin-F1-1 (369 aa).

Residues 328–350 form a disordered region; the sequence is AQHHLESKPAGAAGVGINSSGDD.

It belongs to the cyclin family. Cyclin F subfamily.

The chain is Putative cyclin-F1-1 (CYCF1-1) from Oryza sativa subsp. japonica (Rice).